Here is a 242-residue protein sequence, read N- to C-terminus: MTEVVPSSALSEVSLRLLCHDDIDTVKHLCGDWFPIEYPDSWYRDITSNKKFFSLAATYRGAIVGMIVAEIKNRTKIHKEDGDILASSFSVDTQVAYILSLGVVKEFRKHGIGSLLLESLKDHISTTAQDHCKAIYLHVLTTNNTAINFYENRDFRQHHYLPYYYSIRGVLKDGFTYVLYINGGHPPWTILDYIQHLGSALANLSPCSIPHRIYRQAHSLLCSFLPWSSISSKGGIEYSRTM.

The Cytoplasmic segment spans residues 1–192 (MTEVVPSSAL…GGHPPWTILD (192 aa)). Residues 13–182 (VSLRLLCHDD…DGFTYVLYIN (170 aa)) form the N-acetyltransferase domain. Tyr-38 is a substrate binding site. At Lys-79 the chain carries N6-acetyllysine; by autocatalysis. The active site involves Tyr-97. Leu-99 serves as a coordination point for substrate. 101–103 (LGV) provides a ligand contact to acetyl-CoA. Residues Lys-105, Lys-109, and Lys-121 each carry the N6-acetyllysine; by autocatalysis modification. Position 109 to 114 (109 to 114 (KHGIGS)) interacts with acetyl-CoA. The active site involves His-138. Acetyl-CoA-binding positions include Asn-143 and 150–153 (YENR). Residues 162–173 (PYYYSIRGVLKD) form a required for homodimerization region. Residue Tyr-165 coordinates substrate. Positions 193-236 (YIQHLGSALANLSPCSIPHRIYRQAHSLLCSFLPWSSISSKGGI) form an intramembrane region, helical. Topologically, residues 237–242 (EYSRTM) are cytoplasmic.

Belongs to the acetyltransferase family. NAA60 subfamily. Monomer and homodimer; monomer in presence of substrate and homodimer in its absence. Acetylated: autoacetylation is required for optimal acetyltransferase activity.

The protein localises to the golgi apparatus membrane. The enzyme catalyses N-terminal L-methionyl-[transmembrane protein] + acetyl-CoA = N-terminal N(alpha)-acetyl-L-methionyl-[transmembrane protein] + CoA + H(+). It catalyses the reaction L-lysyl-[protein] + acetyl-CoA = N(6)-acetyl-L-lysyl-[protein] + CoA + H(+). In terms of biological role, N-alpha-acetyltransferase that specifically mediates the acetylation of N-terminal residues of the transmembrane proteins, with a strong preference for N-termini facing the cytosol. Displays N-terminal acetyltransferase activity towards a range of N-terminal sequences including those starting with Met-Lys, Met-Val, Met-Ala and Met-Met. Required for normal chromosomal segregation during anaphase. May also show histone acetyltransferase activity; such results are however unclear in vivo and would require additional experimental evidences. This is N-alpha-acetyltransferase 60 (Naa60) from Rattus norvegicus (Rat).